We begin with the raw amino-acid sequence, 401 residues long: Transcription factor atf-2 (401 aa).

A compositionally biased stretch (low complexity) spans 19 to 38 (SASAEFSSSSSDSSNFSEGS). The interval 19-78 (SASAEFSSSSSDSSNFSEGSPPESRRNSVNESVIKDEHYWERRRRNNDASRRSREKRRQN) is disordered. A compositionally biased stretch (basic and acidic residues) spans 41–78 (ESRRNSVNESVIKDEHYWERRRRNNDASRRSREKRRQN). The bZIP 1 domain occupies 54-100 (DEHYWERRRRNNDASRRSREKRRQNDLAMEEKIMLLSAENERLKSQL). The tract at residues 60 to 85 (RRRRNNDASRRSREKRRQNDLAMEEK) is basic motif 1. The interval 89–96 (LSAENERL) is leucine-zipper 1. A compositionally biased stretch (low complexity) spans 181-211 (SASSLFSSSSSSAFHPFRPSESAQQSFPSSS). Disordered regions lie at residues 181 to 256 (SASS…PQPV) and 273 to 345 (QRRP…AAKR). Polar residues-rich tracts occupy residues 222–256 (DSST…PQPV) and 273–283 (QRRPSPTVPQS). The span at 305–317 (ESVSSSASFSPSH) shows a compositional bias: low complexity. Positions 329–392 (SPQYVDRRRR…AHFKSVLAQR (64 aa)) constitute a bZIP 2 domain. The segment at 335 to 360 (RRRRNNEAAKRCRANRRAVFEYRSRR) is basic motif 2. A coiled-coil region spans residues 361–388 (VQLLEGENEDLRTQIETLKAEIAHFKSV). The interval 364-378 (LEGENEDLRTQIETL) is leucine-zipper 2.

Belongs to the bZIP family. In terms of assembly, interacts with cell death specification protein ces-2. Post-translationally, phosphorylated by mitogen-activated protein kinases pmk-2 and pmk-3. May be responsive to osmotic stress.

The protein localises to the nucleus. Acts as a transcription factor that recognizes and binds to the sequence 5'-[GA]TTA[CT]GTAA[CT]-3', a sequence present in many promoters. Involved in the development of the excretory duct cell, by positively modulating embryonic transcription of putative transcription factor lin-48, acting in concert with cell death specification protein ces-2. Negatively modulates expression of key autophagy-related genes, bec-1/ATG6 and lgg-1/ATG8, and may link together autophagy and apoptosis during development. Positively modulates expression of neuropeptide pigment dispersing factor homologs pdf-1 and pdf-2. The protein is Transcription factor atf-2 of Caenorhabditis elegans.